A 336-amino-acid chain; its full sequence is DNA-directed RNA polymerase subunit alpha (336 aa).

The alpha N-terminal domain (alpha-NTD) stretch occupies residues 1 to 235 (MIEFVIPKKL…HFKIVTEGLP (235 aa)). An alpha C-terminal domain (alpha-CTD) region spans residues 264 to 336 (RENSDVYNRK…KFGLELRKGE (73 aa)).

It belongs to the RNA polymerase alpha chain family. In terms of assembly, homodimer. The RNAP catalytic core consists of 2 alpha, 1 beta, 1 beta' and 1 omega subunit. When a sigma factor is associated with the core the holoenzyme is formed, which can initiate transcription.

The catalysed reaction is RNA(n) + a ribonucleoside 5'-triphosphate = RNA(n+1) + diphosphate. In terms of biological role, DNA-dependent RNA polymerase catalyzes the transcription of DNA into RNA using the four ribonucleoside triphosphates as substrates. In Thermotoga maritima (strain ATCC 43589 / DSM 3109 / JCM 10099 / NBRC 100826 / MSB8), this protein is DNA-directed RNA polymerase subunit alpha.